Reading from the N-terminus, the 50-residue chain is Defensin D2 (50 aa).

Intrachain disulfides connect Cys-3/Cys-50, Cys-14/Cys-35, Cys-20/Cys-44, and Cys-24/Cys-46.

Contains 4 disulfide bonds.

It is found in the secreted. Functionally, antimicrobial peptide active against fungi, Gram-positive and Gram-negative bacteria. Inhibits growth of hyphae in the fungi A.niger (IC(50)=3.5 ug/ml), B.sorokiniana (IC(50)=1.8 ug/ml), F.oxysporum (IC(50)=5.3 ug/ml), F.graminearum (IC(50)=6.9 ug/ml), F.culmorum (IC(50)=6.9 ug/ml) and B.cinerea (IC(50)=13.7 ug/ml). Has no effect on spore germination. Destroys spores in germinated conidia by disruption of cell walls and membranes in A.niger and B.sorokiniana. Causes vacuolization of germinated macro- and microconidia in F.oxysporum, F.graminearum and F.culmorum. Strongly inhibits growth of P.infestans on potato tubers above concentrations of 3.4 ug/ml. Inhibits growth of Gram-positive bacteria C.michiganensis and B.subtilis and of Gram-negative bacteria P.syringae, E.carotovora and E.coli. The chain is Defensin D2 from Nigella sativa (Black cumin).